Reading from the N-terminus, the 482-residue chain is Probable F-box protein At1g30780 (482 aa).

The region spanning Glu-230–Ser-280 is the F-box domain.

This Arabidopsis thaliana (Mouse-ear cress) protein is Probable F-box protein At1g30780.